Reading from the N-terminus, the 298-residue chain is UPF0282 protein Kcr_0286 (298 aa).

It belongs to the UPF0282 family.

This chain is UPF0282 protein Kcr_0286, found in Korarchaeum cryptofilum (strain OPF8).